The sequence spans 192 residues: Hydrogenase expression/formation protein HupD (192 aa).

Residues glutamate 23, aspartate 69, and histidine 100 each contribute to the Ni(2+) site.

The protein belongs to the peptidase A31 family.

Not known. Could be involved in the processing of hydrogenase. The protein is Hydrogenase expression/formation protein HupD (hupD) of Bradyrhizobium diazoefficiens (strain JCM 10833 / BCRC 13528 / IAM 13628 / NBRC 14792 / USDA 110).